The following is a 255-amino-acid chain: Aliphatic sulfonates import ATP-binding protein SsuB (255 aa).

The 222-residue stretch at 12–233 (LLLNAVSKHY…RLGSVRLAEL (222 aa)) folds into the ABC transporter domain. 44–51 (GRSGGGKS) lines the ATP pocket.

It belongs to the ABC transporter superfamily. Aliphatic sulfonates importer (TC 3.A.1.17.2) family. The complex is composed of two ATP-binding proteins (SsuB), two transmembrane proteins (SsuC) and a solute-binding protein (SsuA).

It is found in the cell inner membrane. It carries out the reaction ATP + H2O + aliphatic sulfonate-[sulfonate-binding protein]Side 1 = ADP + phosphate + aliphatic sulfonateSide 2 + [sulfonate-binding protein]Side 1.. In terms of biological role, part of the ABC transporter complex SsuABC involved in aliphatic sulfonates import. Responsible for energy coupling to the transport system. This Escherichia coli O6:K15:H31 (strain 536 / UPEC) protein is Aliphatic sulfonates import ATP-binding protein SsuB.